Reading from the N-terminus, the 290-residue chain is Dehydrodolichyl diphosphate synthase CPT3 (290 aa).

Asp-42 is an active-site residue.

The protein belongs to the UPP synthase family. Mg(2+) is required as a cofactor. As to expression, expressed in leaf trichomes and stem trichomes. Expressed at low levels in young leaves, stems and old leaves.

It is found in the cytoplasm. It localises to the cytosol. It catalyses the reaction n isopentenyl diphosphate + (2E,6E)-farnesyl diphosphate = a di-trans,poly-cis-polyprenyl diphosphate + n diphosphate. Its function is as follows. Catalyzes cis-prenyl chain elongation to produce the polyprenyl backbone of dolichol, a glycosyl carrier-lipid required for the biosynthesis of several classes of glycoprotein. This is Dehydrodolichyl diphosphate synthase CPT3 from Solanum lycopersicum (Tomato).